We begin with the raw amino-acid sequence, 188 residues long: MTNYGAIPTSSHASPLVDVESLSRAKHRIKAGLATRRAWRVMFDFHSMGLPHGVSDAFTRIKTNLAYFRMNYAIVVLIVIFFSLIWHPTSLIVFTVLVVVWIFLYFLRDEPIKLFRFQIDDRTVLIVLSVLTVVLLLLTNATFNIVGALVTGAVLVLIHSVVRKTEDLFLDEEAATTETSGLTSYPST.

4 helical membrane passes run 74-94 (IVVL…LIVF), 95-115 (TVLV…IKLF), 123-143 (TVLI…NATF), and 145-165 (IVGA…VRKT).

Belongs to the PRA1 family. In terms of assembly, interacts with PRA1F2 and PRA1D. Interacts with ACD11 and BPA1. In terms of tissue distribution, expressed in lateral roots, lateral root caps and columella cells.

It localises to the endoplasmic reticulum membrane. It is found in the membrane. The protein resides in the cytoplasm. May be involved in both secretory and endocytic intracellular trafficking in the endosomal/prevacuolar compartments. This Arabidopsis thaliana (Mouse-ear cress) protein is PRA1 family protein F3.